The primary structure comprises 937 residues: Proprotein convertase subtilisin/kexin type 6 (937 aa).

Residues 1-16 (MPPRAPPAPGPRPPPR) are compositionally biased toward pro residues. Positions 1-22 (MPPRAPPAPGPRPPPRAAGRHG) are disordered. Positions 1-45 (MPPRAPPAPGPRPPPRAAGRHGLSPLAPRPWRWLLLLALPAVCSA) are cleaved as a signal peptide. Residues 46 to 132 (LPPPRPVYTN…QQEVKRRVKR (87 aa)) constitute a propeptide that is removed on maturation. The Peptidase S8 domain maps to 149-468 (MWYMHCADKN…FGLVDAEALV (320 aa)). Catalysis depends on charge relay system residues aspartate 186 and histidine 227. Asparagine 240 is a glycosylation site (N-linked (GlcNAc...) asparagine). Serine 401 (charge relay system) is an active-site residue. In terms of domain architecture, P/Homo B spans 476–616 (AVPSQHMCVA…SLILYGTAEH (141 aa)). The Cell attachment site signature appears at 534 to 536 (RGD). The disordered stretch occupies residues 621-656 (FSSHQSRSRMLELSVPEQEPLKAEGPPPQAETPEEE). 5 FU repeats span residues 660-707 (TGVC…GYFG), 711-758 (ARRC…GLYA), 762-806 (QRLC…GTYF), 810-855 (LIRC…GFYP), and 863-911 (HKVC…ETFC). Positions 680 to 898 (CLNCVHFSLG…GFTQLGTSCI (219 aa)) are CRM (Cys-rich motif). N-linked (GlcNAc...) asparagine glycans are attached at residues asparagine 882 and asparagine 900. The 39-residue stretch at 899 to 937 (TNHTCSNADETFCEMVKSNRLCERKLFIQFCCRTCLLAG) folds into the PLAC domain.

Belongs to the peptidase S8 family. The precursor protein seems to exist in the reticulum endoplasmic as both a monomer and a dimer-sized complex whereas mature form exists only as a monomer, suggesting that propeptide cleavage affects its tertiary or quaternary structure. Interacts (immature form including the propeptide) with RCN3; probably involved in the maturation and the secretion of PCSK6. Ca(2+) is required as a cofactor. As to expression, high expression in the anterior pituitary and in several brain regions, the atrium, and the ventricle.

Its function is as follows. Serine endoprotease that processes various proproteins by cleavage at paired basic amino acids, recognizing the RXXX[KR]R consensus motif. Likely functions in the constitutive secretory pathway, with unique restricted distribution in both neuroendocrine and non-neuroendocrine tissues. The sequence is that of Proprotein convertase subtilisin/kexin type 6 (Pcsk6) from Rattus norvegicus (Rat).